Reading from the N-terminus, the 505-residue chain is AMP phosphorylase 2 (505 aa).

AMP-binding positions include glycine 169, 195–200 (SRAITT), threonine 204, serine 265, and lysine 289.

This sequence belongs to the thymidine/pyrimidine-nucleoside phosphorylase family. Type 2 subfamily.

The catalysed reaction is AMP + phosphate = alpha-D-ribose 1,5-bisphosphate + adenine. It catalyses the reaction CMP + phosphate = cytosine + alpha-D-ribose 1,5-bisphosphate. It carries out the reaction UMP + phosphate = alpha-D-ribose 1,5-bisphosphate + uracil. In terms of biological role, catalyzes the conversion of AMP and phosphate to adenine and ribose 1,5-bisphosphate (R15P). Exhibits phosphorylase activity toward CMP and UMP in addition to AMP. Functions in an archaeal AMP degradation pathway, together with R15P isomerase and RubisCO. The sequence is that of AMP phosphorylase 2 from Archaeoglobus fulgidus (strain ATCC 49558 / DSM 4304 / JCM 9628 / NBRC 100126 / VC-16).